The sequence spans 293 residues: Elongation factor Ts (293 aa).

Residues 79-82 (TDFV) form an involved in Mg(2+) ion dislocation from EF-Tu region.

This sequence belongs to the EF-Ts family.

The protein resides in the cytoplasm. Its function is as follows. Associates with the EF-Tu.GDP complex and induces the exchange of GDP to GTP. It remains bound to the aminoacyl-tRNA.EF-Tu.GTP complex up to the GTP hydrolysis stage on the ribosome. In Bacillus pumilus (strain SAFR-032), this protein is Elongation factor Ts.